A 138-amino-acid polypeptide reads, in one-letter code: Putative pre-16S rRNA nuclease (138 aa).

Belongs to the YqgF nuclease family.

The protein resides in the cytoplasm. In terms of biological role, could be a nuclease involved in processing of the 5'-end of pre-16S rRNA. The sequence is that of Putative pre-16S rRNA nuclease from Geobacillus kaustophilus (strain HTA426).